Reading from the N-terminus, the 157-residue chain is 3-dehydroquinate dehydratase (157 aa).

Tyrosine 24 serves as the catalytic Proton acceptor. Positions 75, 81, and 88 each coordinate substrate. Histidine 101 (proton donor) is an active-site residue. Residues 102 to 103 (LS) and arginine 112 contribute to the substrate site.

It belongs to the type-II 3-dehydroquinase family. Homododecamer.

The catalysed reaction is 3-dehydroquinate = 3-dehydroshikimate + H2O. Its pathway is metabolic intermediate biosynthesis; chorismate biosynthesis; chorismate from D-erythrose 4-phosphate and phosphoenolpyruvate: step 3/7. Functionally, catalyzes a trans-dehydration via an enolate intermediate. The sequence is that of 3-dehydroquinate dehydratase from Brucella abortus (strain S19).